The chain runs to 105 residues: UPF0235 protein CT1832 (105 aa).

Belongs to the UPF0235 family.

The polypeptide is UPF0235 protein CT1832 (Chlorobaculum tepidum (strain ATCC 49652 / DSM 12025 / NBRC 103806 / TLS) (Chlorobium tepidum)).